We begin with the raw amino-acid sequence, 487 residues long: 1-aminocyclopropane-1-carboxylate synthase 1 (487 aa).

K286 is subject to N6-(pyridoxal phosphate)lysine.

It belongs to the class-I pyridoxal-phosphate-dependent aminotransferase family. Homodimer. Pyridoxal 5'-phosphate is required as a cofactor.

The catalysed reaction is S-adenosyl-L-methionine = 1-aminocyclopropane-1-carboxylate + S-methyl-5'-thioadenosine + H(+). It functions in the pathway alkene biosynthesis; ethylene biosynthesis via S-adenosyl-L-methionine; ethylene from S-adenosyl-L-methionine: step 1/2. Its function is as follows. Catalyzes the formation of 1-aminocyclopropane-1-carboxylate, a direct precursor of ethylene in higher plants. In Oryza sativa subsp. indica (Rice), this protein is 1-aminocyclopropane-1-carboxylate synthase 1 (ACC1).